The primary structure comprises 253 residues: Flagellar brake protein YcgR (253 aa).

The 120-residue stretch at 120-239 (QRRDFYRFAT…NEGLINRYVY (120 aa)) folds into the PilZ domain.

It belongs to the YcgR family. Monomer. Interacts with the flagellar basal bodies.

It is found in the bacterial flagellum basal body. In terms of biological role, acts as a flagellar brake, regulating swimming and swarming in a bis-(3'-5') cyclic diguanylic acid (c-di-GMP)-dependent manner. Binds 1 c-di-GMP dimer per subunit. Increasing levels of c-di-GMP lead to decreased motility. The polypeptide is Flagellar brake protein YcgR (Methylotenera mobilis (strain JLW8 / ATCC BAA-1282 / DSM 17540)).